The chain runs to 584 residues: MEYRILAEFYERIEKTTSRIEMVSSLVELFKQTPKELIDKVVYLSIGKIAPEYTGLDYNFGEKLAIRALSRVLKIPALEIEKRVRQEGDLGEAGRKLYEELGFKPEGTLTVEEVYNGLLNIAKAVGIGSQERKISIFASLLKKATPLEAKYLLRTITERLRLGIGDNTILEALSIAFTGSSVNREVVERAYNLTSDLGYVAKILAEKGLEGVKQVKIQVGRPVRPMLAERMSSPILILRKLGGKCGAEYKYDGERIQAHRKGDEFYLFSRRLENITHQYPDLIEFLKEAIPHDFIVELEAVVIDPASGEIRPFQELMHRKVKYVTKYHITKYPVAGFLFDIIYLDGEDLTLKPYPERREILEKVVKRTDRIGLVPRKIVDNVEDLENFFYQAIEEGCEGLVCKSLAPNSIYQAGKRGFLWIKYKRDYKSVLADTLDLVVVGGFYGKGQRKGTFGSLLMACYDPESDMFKTVTKVGTGFTEDDFKKLEEILMPRKLNHRHPRVNSILEADMWFEPYLVLEITGAELTLSPVHTCGWGKVSPNRGIGLRFPRFTGRYRFDKRPEDATTEQEIIEMYRMQRKIRVRS.

E248 contacts ATP. The active-site N6-AMP-lysine intermediate is the K250. ATP contacts are provided by R255, R270, E299, F339, R416, and K422.

The protein belongs to the ATP-dependent DNA ligase family. Mg(2+) is required as a cofactor.

It catalyses the reaction ATP + (deoxyribonucleotide)n-3'-hydroxyl + 5'-phospho-(deoxyribonucleotide)m = (deoxyribonucleotide)n+m + AMP + diphosphate.. Its function is as follows. DNA ligase that seals nicks in double-stranded DNA during DNA replication, DNA recombination and DNA repair. The protein is Probable DNA ligase of Aquifex aeolicus (strain VF5).